The following is a 402-amino-acid chain: Tyrosine-protein kinase transforming protein ros (402 aa).

In terms of domain architecture, Protein kinase spans 98 to 377; that stretch reads LNLHKLLGSG…KLQEIRHSPL (280 aa). Residues 104–112 and Lys-133 contribute to the ATP site; that span reads LGSGAFGEV. Asp-232 acts as the Proton acceptor in catalysis. Tyr-268 bears the Phosphotyrosine; by autocatalysis mark.

It belongs to the protein kinase superfamily. Tyr protein kinase family. Insulin receptor subfamily.

The catalysed reaction is L-tyrosyl-[protein] + ATP = O-phospho-L-tyrosyl-[protein] + ADP + H(+). This Galliformes (UR2SV) protein is Tyrosine-protein kinase transforming protein ros (V-ROS).